A 596-amino-acid chain; its full sequence is MSRKSALESSASVLAQADVGASGIHPSVIADAMGDSASAEALERLNRAAQDTKNVDNAKHLARAIQAVQLQDYAKADKLALKLLEKDERLGLAWHILAIAREKTGDFASSLRAYEAALALLPDHGPVAGDLGRLAFRMNMPELAAKFFAHYRLARPDDVEGANNLACALRELNRESEAIEVLKAALGANPEAAVLWNTLGTVLCNIGDAAGSIVFFDESLRLAPDFSKAYHNRAFARLDLGEIEAALADCEAAMRSPGSPEDLAMMQFARATILLALGRVGEGWEAYESRFSPALSDAPRFQIPGVRWSGQDLRGKRLMITTEQGLGDEVMFANMLPDIVEALGPDGFLSLAVERRLAPLFERTFPKVEVTAHRTIAYEGRVFRAAPYIENWDRFDYWAAIGDFLPSLRPTAEAFPKRNAFLQPDPARVAHWKAQLEKLGPGPKVGLLWKSLKLNAERARQFSPFHLWEPVLHTPGVVFVNLQYGDCEEEIAFAKEELGVEIWQPEGIDLKADLDDVAALCAAVDLVIGFSNATINLAGAVGTPIFMLTGASSWTRLGTEYYPWYPSVRCFVTEQYGVWEPTMGRVATALRDFAAS.

4 TPR repeats span residues 91 to 124 (GLAWHILAIAREKTGDFASSLRAYEAALALLPDH), 159 to 192 (VEGANNLACALRELNRESEAIEVLKAALGANPEA), 193 to 226 (AVLWNTLGTVLCNIGDAAGSIVFFDESLRLAPDF), and 228 to 260 (KAYHNRAFARLDLGEIEAALADCEAAMRSPGSP).

The chain is Protein FlbA (flbA) from Caulobacter vibrioides (strain ATCC 19089 / CIP 103742 / CB 15) (Caulobacter crescentus).